The chain runs to 107 residues: Immunoglobulin kappa constant (107 aa).

The region spanning 6 to 103 is the Ig-like domain; that stretch reads PTVSIFPPSS…STSPIVKSFN (98 aa). The cysteines at positions 27 and 87 are disulfide-linked.

The chain is Immunoglobulin kappa constant from Mus musculus (Mouse).